Here is a 263-residue protein sequence, read N- to C-terminus: Small ribosomal subunit protein bS1c (263 aa).

S1 motif domains lie at 27 to 96, 114 to 178, and 192 to 260; these read GDIV…LSIR, DSLL…LSHR, and GNII…LSMK.

Belongs to the bacterial ribosomal protein bS1 family.

The protein resides in the plastid. It is found in the chloroplast. This is Small ribosomal subunit protein bS1c (rps1) from Pyropia yezoensis (Susabi-nori).